A 78-amino-acid chain; its full sequence is Acyl carrier protein (78 aa).

Residues 2-77 enclose the Carrier domain; sequence SDIEQRVKKI…QAIDYVNANL (76 aa). Residue S37 is modified to O-(pantetheine 4'-phosphoryl)serine.

This sequence belongs to the acyl carrier protein (ACP) family. In terms of processing, 4'-phosphopantetheine is transferred from CoA to a specific serine of apo-ACP by AcpS. This modification is essential for activity because fatty acids are bound in thioester linkage to the sulfhydryl of the prosthetic group.

It localises to the cytoplasm. Its pathway is lipid metabolism; fatty acid biosynthesis. Carrier of the growing fatty acid chain in fatty acid biosynthesis. This chain is Acyl carrier protein, found in Methylobacillus flagellatus (strain ATCC 51484 / DSM 6875 / VKM B-1610 / KT).